Consider the following 478-residue polypeptide: Ketoisovalerate oxidoreductase subunit VorA (478 aa).

Heterotrimer of the VorA, VorB and VorC subunits.

The polypeptide is Ketoisovalerate oxidoreductase subunit VorA (vorA) (Methanothermobacter marburgensis (strain ATCC BAA-927 / DSM 2133 / JCM 14651 / NBRC 100331 / OCM 82 / Marburg) (Methanobacterium thermoautotrophicum)).